The primary structure comprises 195 residues: Peptidyl-tRNA hydrolase (195 aa).

Position 14 (Tyr-14) interacts with tRNA. His-19 (proton acceptor) is an active-site residue. Tyr-64 and Asn-66 together coordinate tRNA.

This sequence belongs to the PTH family. In terms of assembly, monomer.

It localises to the cytoplasm. The catalysed reaction is an N-acyl-L-alpha-aminoacyl-tRNA + H2O = an N-acyl-L-amino acid + a tRNA + H(+). Its function is as follows. Hydrolyzes ribosome-free peptidyl-tRNAs (with 1 or more amino acids incorporated), which drop off the ribosome during protein synthesis, or as a result of ribosome stalling. In terms of biological role, catalyzes the release of premature peptidyl moieties from peptidyl-tRNA molecules trapped in stalled 50S ribosomal subunits, and thus maintains levels of free tRNAs and 50S ribosomes. This Desulforudis audaxviator (strain MP104C) protein is Peptidyl-tRNA hydrolase.